The primary structure comprises 432 residues: Testis-specific Y-encoded-like protein 1 (432 aa).

3 disordered regions span residues 1-31 (MSGRDGGERTPLLEAHSLTTSDCAAGAPDPS), 54-110 (ALPP…LETA), and 116-135 (TDDSLGNGCQPGEPQGLSRE). A Glycyl lysine isopeptide (Lys-Gly) (interchain with G-Cter in SUMO2) cross-link involves residue Lys-160.

Belongs to the nucleosome assembly protein (NAP) family. Post-translationally, ubiquitinated by the CRL2(APPBP2) complex, which recognizes the Arg-Xaa-Xaa-Gly sequence at the C-terminus, leading to its degradation.

It localises to the nucleus. Its subcellular location is the nucleolus. This Bos taurus (Bovine) protein is Testis-specific Y-encoded-like protein 1 (TSPYL1).